The following is a 568-amino-acid chain: MSATNPTRDDFAALLEESFAKTDLAEGYVAKGIVTAIEKDVAIVDVGLKVEGRVPLKEFGAKAKDGTLKVGDEVEVYVERIENALGEAVLSREKARREESWQRLEVKFEAGERVEGIIFNQVKGGFTVDLDGAVAFLPRSQVDIRPIRDVTPLMHNPQPFEILKMDKRRGNIVVSRRTVLEESRAEQRSEIVQNLEEGQVVEGVVKNITDYGAFVDLGGIDGLLHVTDMAWRRVNHPSEILNIGQQVKVQIIRINQETHRISLGMKQLESDPWDGIGAKYPVGKKISGTVTNITDYGAFVELEPGIEGLIHISEMSWTKKNVHPGKILSTSQEVDVVVLEVDPTKRRISLGLKQTLENPWQAFAHSHPAGTEVEGEVKNKTEFGLFIGLDGDVDGMVHLSDLDWNRPGEQVIEEFNKGDVVRAVVLDVDVDKERISLGIKQLGRDAVGEAAASGELRKNAVVSAEVIGVNDGGIEVRLVNHEDVTAFIRRADLSRDRDEQRPERFSVGQTVDARVTNFSKKDRKIQLSIKALEIAEEKEAVAQFGSSDSGASLGDILGAALKNRQNNE.

6 consecutive S1 motif domains span residues 27–93 (GYVA…LSRE), 111–177 (GERV…VSRR), 198–266 (GQVV…LGMK), 283–353 (GKKI…LGLK), 370–440 (GTEV…LGIK), and 459–530 (NAVV…LSIK).

It belongs to the bacterial ribosomal protein bS1 family.

Its function is as follows. Binds mRNA; thus facilitating recognition of the initiation point. It is needed to translate mRNA with a short Shine-Dalgarno (SD) purine-rich sequence. This is Small ribosomal subunit protein bS1 (rpsA) from Rhizobium meliloti (strain 1021) (Ensifer meliloti).